We begin with the raw amino-acid sequence, 289 residues long: 4-diphosphocytidyl-2-C-methyl-D-erythritol kinase (289 aa).

Lys-10 is a catalytic residue. Pro-94–Ser-104 serves as a coordination point for ATP. The active site involves Asp-136.

Belongs to the GHMP kinase family. IspE subfamily.

It catalyses the reaction 4-CDP-2-C-methyl-D-erythritol + ATP = 4-CDP-2-C-methyl-D-erythritol 2-phosphate + ADP + H(+). It functions in the pathway isoprenoid biosynthesis; isopentenyl diphosphate biosynthesis via DXP pathway; isopentenyl diphosphate from 1-deoxy-D-xylulose 5-phosphate: step 3/6. In terms of biological role, catalyzes the phosphorylation of the position 2 hydroxy group of 4-diphosphocytidyl-2C-methyl-D-erythritol. The polypeptide is 4-diphosphocytidyl-2-C-methyl-D-erythritol kinase (Bacillus cereus (strain G9842)).